The following is a 152-amino-acid chain: Large ribosomal subunit protein uL24 (152 aa).

The tract at residues 128 to 152 is disordered; that stretch reads VVEEKETSKTSEGGGKTIEETEGEK.

This sequence belongs to the universal ribosomal protein uL24 family. As to quaternary structure, part of the 50S ribosomal subunit.

Its function is as follows. One of two assembly initiator proteins, it binds directly to the 5'-end of the 23S rRNA, where it nucleates assembly of the 50S subunit. Functionally, located at the polypeptide exit tunnel on the outside of the subunit. In Staphylothermus marinus (strain ATCC 43588 / DSM 3639 / JCM 9404 / F1), this protein is Large ribosomal subunit protein uL24.